We begin with the raw amino-acid sequence, 128 residues long: Nanos homolog 1 (128 aa).

Residues 7–23 (FDSWSDYLGLSSLISRG) form an essential for its translational repressor activity region. The tract at residues 23–56 (GLQPRGEGENPSPRWNVSCPAPAEPLPSKEPEGR) is disordered. The Nanos-type zinc-finger motif lies at 60–114 (GCGFCRSNKEAMSLYSSHRLRSLDGRVLCPVLRGYTCPLCGANGDWAHTMRYCPL). 8 residues coordinate Zn(2+): cysteine 61, cysteine 64, histidine 77, cysteine 88, cysteine 96, cysteine 99, histidine 107, and cysteine 112. 2 short sequence motifs (C2HC) span residues 61-88 (CGFCRSNKEAMSLYSSHRLRSLDGRVLC) and 96-112 (CPLCGANGDWAHTMRYC).

Belongs to the nanos family. As to quaternary structure, interacts with ccnb1.

It localises to the cytoplasm. It is found in the perinuclear region. Its function is as follows. Acts as a translational repressor. Can mediate repression affecting different steps in the translation process: cap-driven, IRES-driven, polyadenylated RNAs or nonpolyadenylated RNAs. Essential for the development of primordial germ cells (PGCs) by ensuring their proper migration and survival. The polypeptide is Nanos homolog 1 (nanos1) (Xenopus borealis (Kenyan clawed frog)).